The sequence spans 392 residues: Succinate--CoA ligase [ADP-forming] subunit beta (392 aa).

In terms of domain architecture, ATP-grasp spans 9 to 248; sequence KDILKKFGVS…TNEEDPFEVE (240 aa). ATP-binding positions include Lys-50, 57-59, Glu-103, Met-106, and Glu-111; that span reads GRG. The Mg(2+) site is built by Asn-203 and Asp-217. Residues Asn-268 and 325 to 327 each bind substrate; that span reads GIV.

It belongs to the succinate/malate CoA ligase beta subunit family. Heterotetramer of two alpha and two beta subunits. Requires Mg(2+) as cofactor.

The enzyme catalyses succinate + ATP + CoA = succinyl-CoA + ADP + phosphate. It carries out the reaction GTP + succinate + CoA = succinyl-CoA + GDP + phosphate. It participates in carbohydrate metabolism; tricarboxylic acid cycle; succinate from succinyl-CoA (ligase route): step 1/1. Succinyl-CoA synthetase functions in the citric acid cycle (TCA), coupling the hydrolysis of succinyl-CoA to the synthesis of either ATP or GTP and thus represents the only step of substrate-level phosphorylation in the TCA. The beta subunit provides nucleotide specificity of the enzyme and binds the substrate succinate, while the binding sites for coenzyme A and phosphate are found in the alpha subunit. In Chlorobium limicola (strain DSM 245 / NBRC 103803 / 6330), this protein is Succinate--CoA ligase [ADP-forming] subunit beta.